The primary structure comprises 1755 residues: Transposon Ty1-BL Gag-Pol polyprotein (1755 aa).

Composition is skewed to polar residues over residues 20–31 (SVTSKEVQTTQD), 46–55 (VSTQANSQQP), and 137–168 (VGTHLNTPSPESGNSFPDSSSAKSNMTSTNQH). Disordered stretches follow at residues 20-84 (SVTS…QNGP), 137-173 (VGTHLNTPSPESGNSFPDSSSAKSNMTSTNQHVRPPP), and 350-420 (QQES…IRGS). The tract at residues 299-401 (NNGIPINNKV…NSQSRTARAH (103 aa)) is RNA-binding. Positions 363–372 (SPSDEKKDSR) are enriched in basic and acidic residues. Residues 373-411 (TYTNTTKPKSITRNSQKPNNSQSRTARAHNVSTFNNSPG) are compositionally biased toward polar residues. Catalysis depends on aspartate 461, which acts as the For protease activity; shared with dimeric partner. The segment at 583–640 (NVHTSESTRKYPYPFIHRMLAHANAQTIRYSLKNNTITYFNESDVDWSSAIDYQCPDC) is integrase-type zinc finger-like. Residues 660–835 (NSYEPFQYLH…AGLDISTLLP (176 aa)) enclose the Integrase catalytic domain. Mg(2+)-binding residues include aspartate 671 and aspartate 736. Residues 956 to 1172 (SKAVSPTDST…LGGIGDSNAY (217 aa)) are disordered. A compositionally biased stretch (low complexity) spans 960–969 (SPTDSTPPST). 2 stretches are compositionally biased toward polar residues: residues 1005-1017 (STPQISDIESTDS) and 1031-1043 (MSQSNTHESSYAS). Residues 1044–1053 (KSKDFRHSDS) show a composition bias toward basic and acidic residues. 2 stretches are compositionally biased toward polar residues: residues 1054–1082 (YSDNETNHTNVPISSTGGTNNKTVPQTSE) and 1095–1106 (SIDTSSSESNSL). The short motif at 1178–1212 (KKRSLEDNETEIKVSRDTWNTKNMRSLEPPRSKKR) is the Bipartite nuclear localization signal element. The region spanning 1338–1476 (NNYHITQLDI…DILGLEIKYQ (139 aa)) is the Reverse transcriptase Ty1/copia-type domain. Mg(2+) is bound by residues aspartate 1346, aspartate 1427, aspartate 1428, aspartate 1610, glutamate 1652, and aspartate 1685. An RNase H Ty1/copia-type domain is found at 1610-1752 (DASYGNQPYY…IKTFKLLTNK (143 aa)).

As to quaternary structure, the capsid protein forms a homotrimer, from which the VLPs are assembled. The protease is a homodimer, whose active site consists of two apposed aspartic acid residues. Post-translationally, initially, virus-like particles (VLPs) are composed of the structural unprocessed proteins Gag and Gag-Pol, and also contain the host initiator methionine tRNA (tRNA(i)-Met) which serves as a primer for minus-strand DNA synthesis, and a dimer of genomic Ty RNA. Processing of the polyproteins occurs within the particle and proceeds by an ordered pathway, called maturation. First, the protease (PR) is released by autocatalytic cleavage of the Gag-Pol polyprotein yielding capsid protein p45 and a Pol-p154 precursor protein. This cleavage is a prerequisite for subsequent processing of Pol-p154 at the remaining sites to release the mature structural and catalytic proteins. Maturation takes place prior to the RT reaction and is required to produce transposition-competent VLPs.

Its subcellular location is the cytoplasm. The protein localises to the nucleus. It carries out the reaction DNA(n) + a 2'-deoxyribonucleoside 5'-triphosphate = DNA(n+1) + diphosphate. It catalyses the reaction Endonucleolytic cleavage to 5'-phosphomonoester.. Functionally, capsid protein (CA) is the structural component of the virus-like particle (VLP), forming the shell that encapsulates the retrotransposons dimeric RNA genome. The particles are assembled from trimer-clustered units and there are holes in the capsid shells that allow for the diffusion of macromolecules. CA also has nucleocapsid-like chaperone activity, promoting primer tRNA(i)-Met annealing to the multipartite primer-binding site (PBS), dimerization of Ty1 RNA and initiation of reverse transcription. Its function is as follows. The aspartyl protease (PR) mediates the proteolytic cleavages of the Gag and Gag-Pol polyproteins after assembly of the VLP. In terms of biological role, reverse transcriptase/ribonuclease H (RT) is a multifunctional enzyme that catalyzes the conversion of the retro-elements RNA genome into dsDNA within the VLP. The enzyme displays a DNA polymerase activity that can copy either DNA or RNA templates, and a ribonuclease H (RNase H) activity that cleaves the RNA strand of RNA-DNA heteroduplexes during plus-strand synthesis and hydrolyzes RNA primers. The conversion leads to a linear dsDNA copy of the retrotransposon that includes long terminal repeats (LTRs) at both ends. Integrase (IN) targets the VLP to the nucleus, where a subparticle preintegration complex (PIC) containing at least integrase and the newly synthesized dsDNA copy of the retrotransposon must transit the nuclear membrane. Once in the nucleus, integrase performs the integration of the dsDNA into the host genome. This Saccharomyces cerevisiae (strain ATCC 204508 / S288c) (Baker's yeast) protein is Transposon Ty1-BL Gag-Pol polyprotein (TY1B-BL).